Consider the following 89-residue polypeptide: Small ribosomal subunit protein uS15 (89 aa).

This sequence belongs to the universal ribosomal protein uS15 family. As to quaternary structure, part of the 30S ribosomal subunit. Forms a bridge to the 50S subunit in the 70S ribosome, contacting the 23S rRNA.

Its function is as follows. One of the primary rRNA binding proteins, it binds directly to 16S rRNA where it helps nucleate assembly of the platform of the 30S subunit by binding and bridging several RNA helices of the 16S rRNA. Functionally, forms an intersubunit bridge (bridge B4) with the 23S rRNA of the 50S subunit in the ribosome. In Pseudomonas savastanoi pv. phaseolicola (strain 1448A / Race 6) (Pseudomonas syringae pv. phaseolicola (strain 1448A / Race 6)), this protein is Small ribosomal subunit protein uS15.